The following is a 603-amino-acid chain: UvrABC system protein C (603 aa).

The GIY-YIG domain occupies 14 to 92 (ELPGVYRMLD…IKSLAPRYNI (79 aa)). The region spanning 201–236 (QEVTRRLTKSMEEASAKLAFEQAAVFRDQIQSLHQV) is the UVR domain.

This sequence belongs to the UvrC family. As to quaternary structure, interacts with UvrB in an incision complex.

Its subcellular location is the cytoplasm. Functionally, the UvrABC repair system catalyzes the recognition and processing of DNA lesions. UvrC both incises the 5' and 3' sides of the lesion. The N-terminal half is responsible for the 3' incision and the C-terminal half is responsible for the 5' incision. This chain is UvrABC system protein C, found in Dechloromonas aromatica (strain RCB).